A 512-amino-acid polypeptide reads, in one-letter code: tRNA-2-methylthio-N(6)-dimethylallyladenosine synthase (512 aa).

Residues 1–20 are disordered; it reads MLQQADGVSPDRSSCDTPAP. The MTTase N-terminal domain maps to 21-137; it reads RTFEVRTYGC…LPTLLDRARH (117 aa). [4Fe-4S] cluster-binding residues include Cys-30, Cys-66, Cys-100, Cys-174, Cys-178, and Cys-181. Residues 160-397 enclose the Radical SAM core domain; it reads RESAYAAWVS…ELQERISWEE (238 aa). Residues 399–469 enclose the TRAM domain; the sequence is RAQIGREVEL…PHHLIADAGP (71 aa). The segment covering 470–486 has biased composition (basic and acidic residues); it reads AEHRRTRAGDAHAEGRT. Residues 470–512 are disordered; sequence AEHRRTRAGDAHAEGRTPKTGVGLGMPGIGAPEPAPVTQGCAL.

The protein belongs to the methylthiotransferase family. MiaB subfamily. Monomer. [4Fe-4S] cluster is required as a cofactor.

It is found in the cytoplasm. It carries out the reaction N(6)-dimethylallyladenosine(37) in tRNA + (sulfur carrier)-SH + AH2 + 2 S-adenosyl-L-methionine = 2-methylsulfanyl-N(6)-dimethylallyladenosine(37) in tRNA + (sulfur carrier)-H + 5'-deoxyadenosine + L-methionine + A + S-adenosyl-L-homocysteine + 2 H(+). In terms of biological role, catalyzes the methylthiolation of N6-(dimethylallyl)adenosine (i(6)A), leading to the formation of 2-methylthio-N6-(dimethylallyl)adenosine (ms(2)i(6)A) at position 37 in tRNAs that read codons beginning with uridine. This chain is tRNA-2-methylthio-N(6)-dimethylallyladenosine synthase, found in Mycolicibacterium gilvum (strain PYR-GCK) (Mycobacterium gilvum (strain PYR-GCK)).